The primary structure comprises 326 residues: Mitochondrial glycine transporter (326 aa).

3 Solcar repeats span residues 45 to 134 (HPVI…SKQY), 141 to 225 (PTAL…TRAT), and 237 to 321 (LMPL…MMAK). Helical transmembrane passes span 51–76 (FLCGSISGTCSTLLFQPLDLLKTRLQ), 109–135 (GMSPSIVRCVPGVGIYFGTLYSSKQYF), 147–172 (VILGMGSRSVAGVCMSPITVVKTRYE), 200–223 (GLTATLLRDAPFSGLYLMFYSQTR), 241–267 (VNFSCGVFAGILASLVTQPADVIKTHM), and 296–314 (GSVPRALRRTLMAAMAWTV).

This sequence belongs to the mitochondrial carrier (TC 2.A.29) family. SLC25A38 subfamily.

It localises to the mitochondrion inner membrane. It catalyses the reaction glycine(in) = glycine(out). Mitochondrial glycine transporter that imports glycine into the mitochondrial matrix. Plays an important role in providing glycine for the first enzymatic step in heme biosynthesis, the condensation of glycine with succinyl-CoA to produce 5-aminolevulinate (ALA) in the mitochondrial matrix. Required during erythropoiesis. In terms of biological role, plays a role as pro-apoptotic protein that induces caspase-dependent apoptosis. This chain is Mitochondrial glycine transporter, found in Rattus norvegicus (Rat).